Here is a 350-residue protein sequence, read N- to C-terminus: Izumo sperm-egg fusion protein 1 (350 aa).

Residues methionine 1 to glycine 21 form the signal peptide. 5 disulfide bridges follow: cysteine 22-cysteine 149, cysteine 25-cysteine 152, cysteine 135-cysteine 159, cysteine 139-cysteine 165, and cysteine 182-cysteine 233. The Extracellular segment spans residues cysteine 22 to arginine 292. The important for interaction with IZUMO1R stretch occupies residues tryptophan 148–arginine 160. The Ig-like C2-type domain maps to glutamate 167–threonine 251. N-linked (GlcNAc...) asparagine glycosylation is present at asparagine 204. Residues leucine 293 to phenylalanine 313 form a helical membrane-spanning segment. Residues arginine 314–glutamine 350 lie on the Cytoplasmic side of the membrane. A Phosphoserine modification is found at serine 325.

This sequence belongs to the Izumo family. Monomer, homodimer; disulfide-linked and homooligomer; depending on the context. Interacts with IZUMO1R/JUNO. IZUMO1 and IZUMO1R/JUNO form a complex with 1:1 stoichiometry. In gamete recognition, IZUMO1R/JUNO first binds to monomeric IZUMO1. The weak, but specific interaction with IZUMO1R/JUNO induces IZUMO1 homodimerization. The process follows a tight binding phase where IZUMO1 bends the entire structure towards the sperm membrane side through a thiol-disulfide exchange reaction. The molecule no longer binds to IZUMO1R/JUNO and instead binds to a putative second oocyte receptor. Interacts with ACE3. Part of a oolemmal binding multimeric complex (IZUMO1 complex) composed at least of IZUMO1 and GLIPR1L1; the complex assemblage is influenced by the maturation status of the male germ cell. Interacts with GLIPR1L1. Interacts with FREY; the interaction retains IZUMO1 at the endoplasmic reticulum membrane and coordinates IZUMO1 complex assembly. Interacts with FCRL3/MAIA (via extracellular domain); the interaction replaces IZUMO1R/JUNO as IZUMO1 receptor after sperm-egg adhesion. Interacts with WDR54. Forms a complex with SPACA6 and TMEM81 on spermatocyte cell membrane. Post-translationally, N-glycosylated. Glycosylation is not essential for fusion and for proper protein trafficking in sperm. Phosphorylated. The cytoplasmic C-terminus is phosphorylated and undergoes phosphorylation changes during epididymal transit. Sperm-specific (at protein level). Detectable on sperm surface only after the acrosome reaction.

The protein resides in the cell membrane. It is found in the cytoplasmic vesicle. It localises to the secretory vesicle. Its subcellular location is the acrosome membrane. In terms of biological role, essential sperm cell-surface protein required for fertilization by acting as a ligand for IZUMO1R/JUNO receptor on egg. The IZUMO1:IZUMO1R/JUNO interaction is a necessary adhesion event between sperm and egg that is required for fertilization but is not sufficient for cell fusion. The ligand-receptor interaction probably does not act as a membrane 'fusogen'. Acts a ligand for the human-specific oolemma epitope FCRL3/MAIA during fertilization. FCRL3/MAIA replaces IZUMO1R/JUNO as IZUMO1 receptor after sperm-egg adhesion, which permits species-specific gamete fusion. Plays a critical role in sperm-oolemma binding prior to plasma membrane fusion. Can mediate cell-cell fusion in cultured mammalian cells independently of its binding to IZUMO1R/JUNO. This chain is Izumo sperm-egg fusion protein 1, found in Homo sapiens (Human).